The primary structure comprises 351 residues: DNA polymerase IV (351 aa).

The region spanning 4-185 (IIHVDMDCFF…LPLAKIPGVG (182 aa)) is the UmuC domain. Mg(2+)-binding residues include D8 and D103. E104 is a catalytic residue.

It belongs to the DNA polymerase type-Y family. In terms of assembly, monomer. The cofactor is Mg(2+).

It is found in the cytoplasm. The enzyme catalyses DNA(n) + a 2'-deoxyribonucleoside 5'-triphosphate = DNA(n+1) + diphosphate. Its function is as follows. Poorly processive, error-prone DNA polymerase involved in untargeted mutagenesis. Copies undamaged DNA at stalled replication forks, which arise in vivo from mismatched or misaligned primer ends. These misaligned primers can be extended by PolIV. Exhibits no 3'-5' exonuclease (proofreading) activity. May be involved in translesional synthesis, in conjunction with the beta clamp from PolIII. The sequence is that of DNA polymerase IV from Escherichia coli O1:K1 / APEC.